The chain runs to 556 residues: 2-succinyl-5-enolpyruvyl-6-hydroxy-3-cyclohexene-1-carboxylate synthase (556 aa).

This sequence belongs to the TPP enzyme family. MenD subfamily. Homodimer. Mg(2+) serves as cofactor. The cofactor is Mn(2+). Requires thiamine diphosphate as cofactor.

It catalyses the reaction isochorismate + 2-oxoglutarate + H(+) = 5-enolpyruvoyl-6-hydroxy-2-succinyl-cyclohex-3-ene-1-carboxylate + CO2. Its pathway is quinol/quinone metabolism; 1,4-dihydroxy-2-naphthoate biosynthesis; 1,4-dihydroxy-2-naphthoate from chorismate: step 2/7. The protein operates within quinol/quinone metabolism; menaquinone biosynthesis. Functionally, catalyzes the thiamine diphosphate-dependent decarboxylation of 2-oxoglutarate and the subsequent addition of the resulting succinic semialdehyde-thiamine pyrophosphate anion to isochorismate to yield 2-succinyl-5-enolpyruvyl-6-hydroxy-3-cyclohexene-1-carboxylate (SEPHCHC). This chain is 2-succinyl-5-enolpyruvyl-6-hydroxy-3-cyclohexene-1-carboxylate synthase, found in Escherichia coli (strain ATCC 8739 / DSM 1576 / NBRC 3972 / NCIMB 8545 / WDCM 00012 / Crooks).